Here is a 134-residue protein sequence, read N- to C-terminus: Citrolysin protein 2 (134 aa).

In Citrobacter freundii, this protein is Citrolysin protein 2.